Here is a 912-residue protein sequence, read N- to C-terminus: Protein translocase subunit SecA (912 aa).

ATP-binding positions include Gln-86, 104–108 (GEGKT), and Asp-494. The segment at 860-912 (EAPEKPAQLQYTAPGEDGASQTRVEGRSSGRSGNPAKAAQDGARKPAPKKKKR) is disordered.

The protein belongs to the SecA family. As to quaternary structure, monomer and homodimer. Part of the essential Sec protein translocation apparatus which comprises SecA, SecYEG and auxiliary proteins SecDF. Other proteins may also be involved.

The protein resides in the cell membrane. It is found in the cytoplasm. The catalysed reaction is ATP + H2O + cellular proteinSide 1 = ADP + phosphate + cellular proteinSide 2.. In terms of biological role, part of the Sec protein translocase complex. Interacts with the SecYEG preprotein conducting channel. Has a central role in coupling the hydrolysis of ATP to the transfer of proteins into and across the cell membrane, serving as an ATP-driven molecular motor driving the stepwise translocation of polypeptide chains across the membrane. The protein is Protein translocase subunit SecA of Arthrobacter sp. (strain FB24).